We begin with the raw amino-acid sequence, 518 residues long: Apolipoprotein N-acyltransferase (518 aa).

The next 6 helical transmembrane spans lie at 22–42, 63–83, 101–121, 134–154, 174–194, and 202–222; these read LAFILGASTALSFAPYSLWII, FFHWLSFGFGCFAVGISWVHV, ALLALYLALYPALTGLGLAWF, LLFPALWTLTEWARGWVLTGF, IIGALGLSFIIAMIAGALALC, and LLILLPITAVAAWVAPKLSQI. One can recognise a CN hydrolase domain in the interval 234-484; that stretch reads VQGNIPQSMK…TGVLSATIPL (251 aa). The active-site Proton acceptor is E273. The active site involves K343. The active-site Nucleophile is C395. The helical transmembrane segment at 492 to 512 threads the bilayer; it reads AKIGQTPLLILCGALLLVGFI.

It belongs to the CN hydrolase family. Apolipoprotein N-acyltransferase subfamily.

Its subcellular location is the cell inner membrane. It carries out the reaction N-terminal S-1,2-diacyl-sn-glyceryl-L-cysteinyl-[lipoprotein] + a glycerophospholipid = N-acyl-S-1,2-diacyl-sn-glyceryl-L-cysteinyl-[lipoprotein] + a 2-acyl-sn-glycero-3-phospholipid + H(+). Its pathway is protein modification; lipoprotein biosynthesis (N-acyl transfer). Catalyzes the phospholipid dependent N-acylation of the N-terminal cysteine of apolipoprotein, the last step in lipoprotein maturation. The sequence is that of Apolipoprotein N-acyltransferase from Shewanella oneidensis (strain ATCC 700550 / JCM 31522 / CIP 106686 / LMG 19005 / NCIMB 14063 / MR-1).